Reading from the N-terminus, the 183-residue chain is dTDP-4-dehydrorhamnose 3,5-epimerase (183 aa).

Residues Arg24, Glu29, 48–50 (QDN), and Arg60 contribute to the substrate site. Catalysis depends on His63, which acts as the Proton acceptor. Residues Lys73 and His120 each coordinate substrate. The active-site Proton donor is the Tyr133. Residues Glu144 and Lys169 each contribute to the substrate site.

Belongs to the dTDP-4-dehydrorhamnose 3,5-epimerase family. Homodimer.

It catalyses the reaction dTDP-4-dehydro-6-deoxy-alpha-D-glucose = dTDP-4-dehydro-beta-L-rhamnose. The protein operates within carbohydrate biosynthesis; dTDP-L-rhamnose biosynthesis. Its pathway is bacterial outer membrane biogenesis; LPS O-antigen biosynthesis. Catalyzes the epimerization of the C3' and C5'positions of dTDP-6-deoxy-D-xylo-4-hexulose, forming dTDP-6-deoxy-L-lyxo-4-hexulose. The sequence is that of dTDP-4-dehydrorhamnose 3,5-epimerase from Salmonella typhimurium (strain LT2 / SGSC1412 / ATCC 700720).